Here is a 91-residue protein sequence, read N- to C-terminus: DNA-binding protein HU (91 aa).

It belongs to the bacterial histone-like protein family.

Functionally, histone-like DNA-binding protein which is capable of wrapping DNA to stabilize it, and thus to prevent its denaturation under extreme environmental conditions. Also seems to act as a fortuitous virulence factor in delayed sequelae by binding to heparan sulfate-proteoglycans in the extracellular matrix of target organs and acting as a nidus for in situ immune complex formation. This Streptococcus gordonii protein is DNA-binding protein HU (hup).